The chain runs to 349 residues: ATP phosphoribosyltransferase regulatory subunit (349 aa).

The disordered stretch occupies residues 327 to 349 (GRGRGVRPRRASARGGRARARPR). Residues 330-349 (RGVRPRRASARGGRARARPR) are compositionally biased toward basic residues.

Belongs to the class-II aminoacyl-tRNA synthetase family. HisZ subfamily. Heteromultimer composed of HisG and HisZ subunits.

The protein resides in the cytoplasm. It participates in amino-acid biosynthesis; L-histidine biosynthesis; L-histidine from 5-phospho-alpha-D-ribose 1-diphosphate: step 1/9. Required for the first step of histidine biosynthesis. May allow the feedback regulation of ATP phosphoribosyltransferase activity by histidine. The chain is ATP phosphoribosyltransferase regulatory subunit from Anaeromyxobacter sp. (strain K).